Consider the following 152-residue polypeptide: Superoxide dismutase [Cu-Zn] (152 aa).

3 residues coordinate Cu cation: His45, His47, and His62. Cys56 and Cys145 form a disulfide bridge. 4 residues coordinate Zn(2+): His62, His70, His79, and Asp82. Position 119 (His119) interacts with Cu cation.

This sequence belongs to the Cu-Zn superoxide dismutase family. In terms of assembly, homodimer. Cu cation is required as a cofactor. Zn(2+) serves as cofactor.

It localises to the cytoplasm. The catalysed reaction is 2 superoxide + 2 H(+) = H2O2 + O2. In terms of biological role, destroys radicals which are normally produced within the cells and which are toxic to biological systems. This is Superoxide dismutase [Cu-Zn] (SODCC) from Capsicum annuum (Capsicum pepper).